The chain runs to 179 residues: ATP synthase subunit delta (179 aa).

Belongs to the ATPase delta chain family. In terms of assembly, F-type ATPases have 2 components, F(1) - the catalytic core - and F(0) - the membrane proton channel. F(1) has five subunits: alpha(3), beta(3), gamma(1), delta(1), epsilon(1). F(0) has three main subunits: a(1), b(2) and c(10-14). The alpha and beta chains form an alternating ring which encloses part of the gamma chain. F(1) is attached to F(0) by a central stalk formed by the gamma and epsilon chains, while a peripheral stalk is formed by the delta and b chains.

It localises to the cell inner membrane. F(1)F(0) ATP synthase produces ATP from ADP in the presence of a proton or sodium gradient. F-type ATPases consist of two structural domains, F(1) containing the extramembraneous catalytic core and F(0) containing the membrane proton channel, linked together by a central stalk and a peripheral stalk. During catalysis, ATP synthesis in the catalytic domain of F(1) is coupled via a rotary mechanism of the central stalk subunits to proton translocation. Functionally, this protein is part of the stalk that links CF(0) to CF(1). It either transmits conformational changes from CF(0) to CF(1) or is implicated in proton conduction. The sequence is that of ATP synthase subunit delta from Burkholderia cenocepacia (strain ATCC BAA-245 / DSM 16553 / LMG 16656 / NCTC 13227 / J2315 / CF5610) (Burkholderia cepacia (strain J2315)).